A 177-amino-acid chain; its full sequence is ATP-dependent protease subunit HslV (177 aa).

Thr-7 is a catalytic residue. Na(+) contacts are provided by Ala-162, Cys-165, and Thr-168.

The protein belongs to the peptidase T1B family. HslV subfamily. As to quaternary structure, a double ring-shaped homohexamer of HslV is capped on each side by a ring-shaped HslU homohexamer. The assembly of the HslU/HslV complex is dependent on binding of ATP.

The protein localises to the cytoplasm. The catalysed reaction is ATP-dependent cleavage of peptide bonds with broad specificity.. With respect to regulation, allosterically activated by HslU binding. Functionally, protease subunit of a proteasome-like degradation complex believed to be a general protein degrading machinery. This Leptospira biflexa serovar Patoc (strain Patoc 1 / Ames) protein is ATP-dependent protease subunit HslV.